Consider the following 369-residue polypeptide: Somatostatin receptor type 2 (369 aa).

Residues Met1 to Asn43 are Extracellular-facing. Residues Asn9, Asn22, Asn29, and Asn32 are each glycosylated (N-linked (GlcNAc...) asparagine). Residues Ala44–Val67 form a helical membrane-spanning segment. At Ile68–Thr78 the chain is on the cytoplasmic side. A helical membrane pass occupies residues Asn79–Val103. The Extracellular segment spans residues Ala104–Val118. Cys115 and Cys193 are joined by a disulfide. The helical transmembrane segment at Met119–Ile138 threads the bilayer. The Cytoplasmic portion of the chain corresponds to Asp139–Met161. Residues Ile162–Ala181 traverse the membrane as a helical segment. Residues Gly182–Gly207 lie on the Extracellular side of the membrane. The chain crosses the membrane as a helical span at residues Phe208–Leu229. The Cytoplasmic segment spans residues Phe230–Lys253. The helical transmembrane segment at Val254–Ser278 threads the bilayer. The Extracellular segment spans residues Ser279–Pro288. A helical transmembrane segment spans residues Ala289 to Ala303. Topologically, residues Asn304–Ile369 are cytoplasmic. A lipid anchor (S-palmitoyl cysteine) is attached at Cys328. A phosphoserine mark is found at Ser341, Ser343, and Ser348. Residues Thr353 and Thr354 each carry the phosphothreonine modification.

The protein belongs to the G-protein coupled receptor 1 family. Homodimer and heterodimer with SSTR3 and SSTR5. Heterodimerization with SSTR3 inactivates SSTR3 receptor function. Heterodimerization with SSTR5 is enhanced by agonist stimulation of SSTR2 and increases SSTR2 cell growth inhibition activity. Following agonist stimulation, homodimers dissociate into monomers which is required for receptor internalization. Interacts with beta-arrestin; this interaction is necessary for receptor internalization and is destabilized by heterodimerization with SSTR5 which results in increased recycling of SSTR2 to the cell surface. Interacts (via C-terminus) with SHANK1 (via PDZ domain). In terms of processing, phosphorylated on serine and threonine residues in response to agonist stimulation, leading to receptor desensitization and rapid internalization. Phosphorylated to a greater extent on serine than threonine residues. Threonine phosphorylation is required for arrestin binding and receptor endocytosis but is not necessary for desensitization. Cerebrum and kidney.

It localises to the cell membrane. The protein resides in the cytoplasm. In terms of biological role, receptor for somatostatin-14 and -28. This receptor is coupled via pertussis toxin sensitive G proteins to inhibition of adenylyl cyclase. In addition it stimulates phosphotyrosine phosphatase and PLC via pertussis toxin insensitive as well as sensitive G proteins. Inhibits calcium entry by suppressing voltage-dependent calcium channels. Acts as the functionally dominant somatostatin receptor in pancreatic alpha- and beta-cells where it mediates the inhibitory effect of somatostatin-14 on hormone secretion. Inhibits cell growth through enhancement of MAPK1 and MAPK2 phosphorylation and subsequent up-regulation of CDKN1B. Stimulates neuronal migration and axon outgrowth and may participate in neuron development and maturation during brain development. Mediates negative regulation of insulin receptor signaling through PTPN6. Inactivates SSTR3 receptor function following heterodimerization. In Mus musculus (Mouse), this protein is Somatostatin receptor type 2 (Sstr2).